Here is a 680-residue protein sequence, read N- to C-terminus: Structure-specific endonuclease subunit SLX4 (680 aa).

3 disordered regions span residues 15-92, 141-183, and 450-490; these read EVAK…EPVV, ESSS…STQQ, and LGSG…ATRL. Acidic residues predominate over residues 22–33; the sequence is DSDEPIIDEDDL. The span at 60–86 shows a compositional bias: basic and acidic residues; the sequence is NNSKDTFKETPLELVDKEEAIEDKAPN. Residues 156–174 show a composition bias toward basic residues; that stretch reads LKSKKITKPKLTKTSKRTK. Positions 473–490 are enriched in polar residues; it reads TVISRSPQSTRTPQATRL.

This sequence belongs to the SLX4 family. Forms a heterodimer with SLX1. In terms of processing, phosphorylated in response to DNA damage.

The protein localises to the nucleus. Its function is as follows. Regulatory subunit of the SLX1-SLX4 structure-specific endonuclease that resolves DNA secondary structures generated during DNA repair and recombination. Has endonuclease activity towards branched DNA substrates, introducing single-strand cuts in duplex DNA close to junctions with ss-DNA. The polypeptide is Structure-specific endonuclease subunit SLX4 (Vanderwaltozyma polyspora (strain ATCC 22028 / DSM 70294 / BCRC 21397 / CBS 2163 / NBRC 10782 / NRRL Y-8283 / UCD 57-17) (Kluyveromyces polysporus)).